The chain runs to 416 residues: Neamine transaminase NeoN (416 aa).

N6-(pyridoxal phosphate)lysine is present on K231.

The protein belongs to the class-III pyridoxal-phosphate-dependent aminotransferase family. The cofactor is pyridoxal 5'-phosphate.

The enzyme catalyses neomycin C + 2-oxoglutarate = 6'''-deamino-6'''-oxoneomycin C + L-glutamate. It carries out the reaction neamine + 2-oxoglutarate = 6'-oxoparomamine + L-glutamate. It functions in the pathway antibiotic biosynthesis; neomycin biosynthesis. Functionally, 6'-oxoglucosaminyl:L-glutamate aminotransferase that catalyzes pyridoxal-5'-phosphate-mediated transamination for the conversion of paromamine to neamine in the biosynthetic pathway of neomycin. Also able to catalyze deamination at C-6''' of neomycin. The protein is Neamine transaminase NeoN (neoN) of Streptomyces fradiae (Streptomyces roseoflavus).